A 660-amino-acid polypeptide reads, in one-letter code: Anoctamin-10 (660 aa).

Residues 1–207 (MKVTLSALDT…DSIRGYFGET (207 aa)) are Cytoplasmic-facing. The helical transmembrane segment at 208 to 228 (IALYFGFLEYFTFALIPMAVI) threads the bilayer. Residues 229–240 (GLPYYLFVWEDY) are Extracellular-facing. A helical membrane pass occupies residues 241-261 (DKYVIFASFNLIWSTVILELW). Topologically, residues 262–316 (KRGCANMTYRWGTLLMKRKFEEPRPGFHGVLGINSITGKEEPLYPSYKRQLRIYL) are cytoplasmic. A helical membrane pass occupies residues 317 to 337 (VSLPFVCLCLYFSLYVMMIYF). Over 338–352 (DMEVWALGLHENSGS) the chain is Extracellular. The chain crosses the membrane as a helical span at residues 353 to 373 (EWTSVLLYVPSIIYAIVIEIM). Residues 374–400 (NRLYRYAAEFLTSWENHRLESAYQNHL) lie on the Cytoplasmic side of the membrane. A helical membrane pass occupies residues 401 to 421 (ILKVLVFNFLNCFASLFYIAF). The Extracellular segment spans residues 422–500 (VLKDMKLLRQ…YLGTFDDYLE (79 aa)). The helical transmembrane segment at 501–521 (LFLQFGYVSLFSCVYPLAAAF) threads the bilayer. Over 522–553 (AVLNNFTEVNSDALKMCRVFKRPFSEPSANIG) the chain is Cytoplasmic. Residues 554–574 (VWQLAFETMSVISVVTNCALI) form a helical membrane-spanning segment. Over 575 to 590 (GMSPQVNAVFPESKAD) the chain is Extracellular. The helical transmembrane segment at 591–611 (LILIVVAVEHALLALKFILAF) threads the bilayer. The Cytoplasmic segment spans residues 612–660 (AIPDKPRHIQMKLARLEFESLEALKQQQMKLVTENLKEEPMESGKEKAT).

This sequence belongs to the anoctamin family. Highly expressed in the brain. Intermediate levels in the retina and heart and low levels in the placenta, liver, lung, duodenum, kidney, testis and spleen. In brain areas, highest expression in the frontal and occipital cortices and in the cerebellum. Lower expression in the fetal brain than in the adult brain.

It is found in the cell membrane. Does not exhibit calcium-activated chloride channel (CaCC) activity. Can inhibit the activity of ANO1. The polypeptide is Anoctamin-10 (ANO10) (Homo sapiens (Human)).